The following is a 1018-amino-acid chain: Antigenic heat-stable 120 kDa protein (1018 aa).

Residues 1-11 show a composition bias toward polar residues; sequence MSKDGNLNTSE. Disordered stretches follow at residues 1–82, 355–402, and 995–1018; these read MSKD…DPIT, GQSK…MPQS, and RDSI…PPQR. A compositionally biased stretch (basic and acidic residues) spans 19-34; the sequence is EYTEEQKQTLEQEQKE. Residues 53-68 are compositionally biased toward low complexity; it reads TSASSAQSTPSTSALS. 4 stretches are compositionally biased toward polar residues: residues 69–80, 355–380, 387–402, and 996–1007; these read GNISPDSQTSDP, GQSK…QYKQ, PTNQ…MPQS, and DSIQSENLNKST. Basic and acidic residues predominate over residues 1009–1018; it reads IKRESSPPQR.

The protein resides in the cytoplasm. The chain is Antigenic heat-stable 120 kDa protein (sca4) from Rickettsia japonica (strain ATCC VR-1363 / YH).